The sequence spans 364 residues: UDP-N-acetylglucosamine--N-acetylmuramyl-(pentapeptide) pyrophosphoryl-undecaprenol N-acetylglucosamine transferase (364 aa).

UDP-N-acetyl-alpha-D-glucosamine contacts are provided by residues 10–12 (TGG), asparagine 123, serine 198, isoleucine 251, and glutamine 296.

The protein belongs to the glycosyltransferase 28 family. MurG subfamily.

It is found in the cell membrane. The enzyme catalyses di-trans,octa-cis-undecaprenyl diphospho-N-acetyl-alpha-D-muramoyl-L-alanyl-D-glutamyl-meso-2,6-diaminopimeloyl-D-alanyl-D-alanine + UDP-N-acetyl-alpha-D-glucosamine = di-trans,octa-cis-undecaprenyl diphospho-[N-acetyl-alpha-D-glucosaminyl-(1-&gt;4)]-N-acetyl-alpha-D-muramoyl-L-alanyl-D-glutamyl-meso-2,6-diaminopimeloyl-D-alanyl-D-alanine + UDP + H(+). The protein operates within cell wall biogenesis; peptidoglycan biosynthesis. Cell wall formation. Catalyzes the transfer of a GlcNAc subunit on undecaprenyl-pyrophosphoryl-MurNAc-pentapeptide (lipid intermediate I) to form undecaprenyl-pyrophosphoryl-MurNAc-(pentapeptide)GlcNAc (lipid intermediate II). This chain is UDP-N-acetylglucosamine--N-acetylmuramyl-(pentapeptide) pyrophosphoryl-undecaprenol N-acetylglucosamine transferase, found in Exiguobacterium sibiricum (strain DSM 17290 / CCUG 55495 / CIP 109462 / JCM 13490 / 255-15).